A 598-amino-acid chain; its full sequence is Elongation factor 4 (598 aa).

The tr-type G domain occupies 2–184 (KNIRNFSIIA…EIVAKIPAPE (183 aa)). GTP-binding positions include 14–19 (DHGKST) and 131–134 (NKID).

Belongs to the TRAFAC class translation factor GTPase superfamily. Classic translation factor GTPase family. LepA subfamily.

Its subcellular location is the cell inner membrane. It catalyses the reaction GTP + H2O = GDP + phosphate + H(+). Functionally, required for accurate and efficient protein synthesis under certain stress conditions. May act as a fidelity factor of the translation reaction, by catalyzing a one-codon backward translocation of tRNAs on improperly translocated ribosomes. Back-translocation proceeds from a post-translocation (POST) complex to a pre-translocation (PRE) complex, thus giving elongation factor G a second chance to translocate the tRNAs correctly. Binds to ribosomes in a GTP-dependent manner. This is Elongation factor 4 from Haemophilus influenzae (strain ATCC 51907 / DSM 11121 / KW20 / Rd).